A 267-amino-acid chain; its full sequence is Mediator of RNA polymerase II transcription subunit 8 (267 aa).

Coiled coils occupy residues 1–26 (MQREEKQLEACLDALISQVSDIKNSL) and 116–160 (DVEE…EERE). The interval 190-267 (GLSNRRPPGQ…KSASMHPYQR (78 aa)) is disordered. Residues 227–245 (PPNQQQQHMAGVSMSQGSQ) are compositionally biased toward polar residues.

Belongs to the Mediator complex subunit 8 family. As to quaternary structure, component of the Mediator complex. May be part of a multisubunit E3 ubiquitin-protein ligase complex.

The protein localises to the nucleus. Its pathway is protein modification; protein ubiquitination. Its function is as follows. Component of the Mediator complex, a coactivator involved in the regulated transcription of nearly all RNA polymerase II-dependent genes. Mediator functions as a bridge to convey information from gene-specific regulatory proteins to the basal RNA polymerase II transcription machinery. Mediator is recruited to promoters by direct interactions with regulatory proteins and serves as a scaffold for the assembly of a functional preinitiation complex with RNA polymerase II and the general transcription factors. May play a role as a target recruitment subunit in E3 ubiquitin-protein ligase complexes and thus in ubiquitination and subsequent proteasomal degradation of target proteins. In Xenopus tropicalis (Western clawed frog), this protein is Mediator of RNA polymerase II transcription subunit 8 (med8).